The chain runs to 198 residues: Neutrophil gelatinase-associated lipocalin (198 aa).

The N-terminal stretch at M1 to A20 is a signal peptide. The residue at position 21 (Q21) is a Pyrrolidone carboxylic acid. Y72 to T74 contacts a carboxymycobactin. N85 carries an N-linked (GlcNAc...) asparagine glycan. C96 and C195 are oxidised to a cystine. Residue Y126 coordinates enterobactin. 3 residues coordinate a carboxymycobactin: K145, K154, and Y158. An enterobactin-binding site is contributed by K154.

This sequence belongs to the calycin superfamily. Lipocalin family. In terms of assembly, monomer. Homodimer; disulfide-linked. Heterodimer; disulfide-linked with MMP9. In terms of tissue distribution, detected in the ureteric bud in embryonic kidney (at protein level).

The protein resides in the secreted. Its subcellular location is the cytoplasmic granule lumen. The protein localises to the cytoplasmic vesicle lumen. In terms of biological role, iron-trafficking protein involved in multiple processes such as apoptosis, innate immunity and renal development. Binds iron through association with 2,3-dihydroxybenzoic acid (2,3-DHBA), a siderophore that shares structural similarities with bacterial enterobactin, and delivers or removes iron from the cell, depending on the context. Iron-bound form (holo-24p3) is internalized following binding to the SLC22A17 (24p3R) receptor, leading to release of iron and subsequent increase of intracellular iron concentration. In contrast, association of the iron-free form (apo-24p3) with the SLC22A17 (24p3R) receptor is followed by association with an intracellular siderophore, iron chelation and iron transfer to the extracellular medium, thereby reducing intracellular iron concentration. Involved in apoptosis due to interleukin-3 (IL3) deprivation: iron-loaded form increases intracellular iron concentration without promoting apoptosis, while iron-free form decreases intracellular iron levels, inducing expression of the proapoptotic protein BCL2L11/BIM, resulting in apoptosis. Involved in innate immunity; limits bacterial proliferation by sequestering iron bound to microbial siderophores, such as enterobactin. Can also bind siderophores from M.tuberculosis. This chain is Neutrophil gelatinase-associated lipocalin (Lcn2), found in Rattus norvegicus (Rat).